The chain runs to 348 residues: Acetylesterase (348 aa).

The first 16 residues, 1 to 16 (MRSILVIPSFVAVLNA), serve as a signal peptide directing secretion. N-linked (GlcNAc...) asparagine glycosylation is found at Asn-64, Asn-165, Asn-218, Asn-223, and Asn-297.

This sequence belongs to the carbohydrate esterase CE16 family. N-glycosylated.

The protein resides in the secreted. It carries out the reaction an acetyl ester + H2O = an aliphatic alcohol + acetate + H(+). Its function is as follows. Acetylesterase that acts as an exo-deacetylase. Shows activity towards naphtyl acetate, triacetin, as well as towards glucose- and xylose acetates. Liberates acetic acid from xylo-oligomers. The chain is Acetylesterase from Hypocrea jecorina (Trichoderma reesei).